Reading from the N-terminus, the 526-residue chain is Na(+)/H(+) antiporter NhaB (526 aa).

The next 12 helical transmembrane spans lie at 25–45 (ILLF…IAGW), 52–72 (IFTL…LLAI), 89–109 (LVAN…IYFM), 130–164 (LSLA…FYAI), 204–224 (LMMH…VGEP), 242–262 (IRMS…CVLV), 307–327 (IALW…LIGL), 350–370 (QEAL…AVII), 391–411 (LALF…VFVG), 448–468 (VATP…LAPL), 479–499 (MALP…EMLL), and 505–525 (WFYQ…LPVL).

This sequence belongs to the NhaB Na(+)/H(+) (TC 2.A.34) antiporter family.

The protein localises to the cell inner membrane. The enzyme catalyses 2 Na(+)(in) + 3 H(+)(out) = 2 Na(+)(out) + 3 H(+)(in). Na(+)/H(+) antiporter that extrudes sodium in exchange for external protons. The protein is Na(+)/H(+) antiporter NhaB of Aeromonas hydrophila subsp. hydrophila (strain ATCC 7966 / DSM 30187 / BCRC 13018 / CCUG 14551 / JCM 1027 / KCTC 2358 / NCIMB 9240 / NCTC 8049).